Consider the following 1135-residue polypeptide: WASH complex subunit 4 (1135 aa).

Alanine 2 bears the N-acetylalanine mark.

This sequence belongs to the SWIP family. As to quaternary structure, probable component of the WASH complex.

This is WASH complex subunit 4 from Dictyostelium discoideum (Social amoeba).